The following is a 486-amino-acid chain: Shugoshin-1 (486 aa).

The stretch at Ile71 to Lys154 forms a coiled coil. 6 disordered regions span residues Met137 to Thr163, Tyr187 to Glu209, His222 to Asn251, Ala323 to Ser346, Pro382 to Pro403, and Thr418 to Ala467. Basic and acidic residues predominate over residues Glu331–Ser346. Basic residues predominate over residues Gln387–Ser396. The span at Ala423–Gln433 shows a compositional bias: polar residues.

It belongs to the shugoshin family. As to expression, highly expressed in roots. Expressed in panicles. Expressed at low levels in leaves.

Its subcellular location is the nucleus. It localises to the nucleolus. The protein localises to the chromosome. It is found in the centromere. Its function is as follows. Plays a central role in chromosome cohesion during meiosis I by preventing premature dissociation of cohesin complex from centromeres after prophase, when most of cohesin complex dissociates from chromosomes arms. Required for the timely assembly and maintenance of synaptonemal complex (SC) during early prophase I. Required for maintenance of centromeric cohesion before prophase II and correct segregation of chromatids during meiosis II. Has apparently no function in mitosis. The polypeptide is Shugoshin-1 (Oryza sativa subsp. japonica (Rice)).